We begin with the raw amino-acid sequence, 273 residues long: Cysteine protease S273R (273 aa).

Active-site residues include H168 and N187. Q226 provides a ligand contact to substrate. Residue C232 is the Nucleophile of the active site.

This sequence belongs to the peptidase C63 family.

It is found in the host cytoplasm. The protein localises to the virion. Functionally, cysteine protease that plays several role during infection including processing of the structural polyprotein or inhibition of the host immune response. Catalyzes the maturation of the pp220 and pp62 polyprotein precursors into core-shell proteins. Plays a role in the disruption of host pyroptosis via specific cleavage of gasdermin D/GSDMD. In addition, strongly decreases the host cGAS-STING signaling by targeting IKBKE via its enzymatic activity. Also impairs host FOXJ1-mediated antiviral effect via degradation of FOXJ1. This is Cysteine protease S273R from African swine fever virus (isolate Tick/Malawi/Lil 20-1/1983) (ASFV).